A 218-amino-acid polypeptide reads, in one-letter code: Outer-membrane lipoprotein LolB (218 aa).

Positions 1-20 are cleaved as a signal peptide; it reads MSQVIRTLALTGLALAGLSG. Residue cysteine 21 is the site of N-palmitoyl cysteine attachment. Cysteine 21 carries the S-diacylglycerol cysteine lipid modification.

It belongs to the LolB family. As to quaternary structure, monomer.

Its subcellular location is the cell outer membrane. Functionally, plays a critical role in the incorporation of lipoproteins in the outer membrane after they are released by the LolA protein. The sequence is that of Outer-membrane lipoprotein LolB from Xanthomonas campestris pv. campestris (strain 8004).